The chain runs to 394 residues: Glycogen synthase kinase 1 (394 aa).

In terms of domain architecture, Protein kinase spans 35–318; sequence YTQCKIVGNG…AIDAMVHPFF (284 aa). ATP-binding positions include 41 to 49 and Lys64; that span reads VGNGSFGVV.

The protein belongs to the protein kinase superfamily. CMGC Ser/Thr protein kinase family. GSK-3 subfamily.

The protein resides in the cytoplasm. The catalysed reaction is L-seryl-[protein] + ATP = O-phospho-L-seryl-[protein] + ADP + H(+). Its function is as follows. Protein kinase that acts downstream of the MPS1 MAPK cascade as a highly conservative signal modulator that dictates growth, conidiation and pathogenicity. Phosphorylates HAT1 at 'Ser-8' to block its translocation from the nucleus to the cytoplasm where HAT1 positively regulates appressorium development and pathogenicity. The protein is Glycogen synthase kinase 1 of Pyricularia oryzae (Rice blast fungus).